Here is a 371-residue protein sequence, read N- to C-terminus: Ferrochelatase (371 aa).

Residues H218 and E299 each coordinate Fe cation.

This sequence belongs to the ferrochelatase family.

The protein resides in the cytoplasm. It catalyses the reaction heme b + 2 H(+) = protoporphyrin IX + Fe(2+). Its pathway is porphyrin-containing compound metabolism; protoheme biosynthesis; protoheme from protoporphyrin-IX: step 1/1. Functionally, catalyzes the ferrous insertion into protoporphyrin IX. This is Ferrochelatase from Cupriavidus necator (strain ATCC 17699 / DSM 428 / KCTC 22496 / NCIMB 10442 / H16 / Stanier 337) (Ralstonia eutropha).